The sequence spans 510 residues: AAA-ATPase At3g28540 (510 aa).

The chain crosses the membrane as a helical span at residues 7-25 (LFGFTGTTMASLMFFWSVY). 246–253 (GPPGTGKS) contacts ATP. A disordered region spans residues 460 to 510 (KEKAKKLAEEEKMKKAARDARRIKKKAEEEHKKKNKVEENGDVSHDNGNHI).

It belongs to the AAA ATPase family. BCS1 subfamily. The cofactor is Mg(2+).

Its subcellular location is the membrane. The catalysed reaction is ATP + H2O = ADP + phosphate + H(+). In Arabidopsis thaliana (Mouse-ear cress), this protein is AAA-ATPase At3g28540.